A 166-amino-acid polypeptide reads, in one-letter code: Large ribosomal subunit protein mL49 (166 aa).

Residues 54-77 (PTKIPEPPKHKHYPTPSGWQPPRD) are disordered.

Belongs to the mitochondrion-specific ribosomal protein mL49 family. Component of the mitochondrial ribosome large subunit (39S) which comprises a 16S rRNA and about 50 distinct proteins. Interacts with OXA1L.

The protein resides in the mitochondrion. The chain is Large ribosomal subunit protein mL49 (Mrpl49) from Mus musculus (Mouse).